The following is a 125-amino-acid chain: Large ribosomal subunit protein bL19 (125 aa).

This sequence belongs to the bacterial ribosomal protein bL19 family.

In terms of biological role, this protein is located at the 30S-50S ribosomal subunit interface and may play a role in the structure and function of the aminoacyl-tRNA binding site. This is Large ribosomal subunit protein bL19 from Ehrlichia chaffeensis (strain ATCC CRL-10679 / Arkansas).